Consider the following 204-residue polypeptide: MSKRKSAKYKLDRRMGENIWGRPNSPVNKRSYGPGQHGQRRKGKTSDFGLQLRAKQKLKGYYGDVTEKQFRRTYAEASRMKGDTGQNLIGLLEQRLDMVVYRAKFAPTVFAARQIVNHGHIYVNGVKTNIPSARVKVGDVISLGNKAKEMALVIEAQSLPEREIPDYVAPDGNDKVTFTRVPKLDEVPYPVTMEPNLVVEFYSR.

A disordered region spans residues 1-49 (MSKRKSAKYKLDRRMGENIWGRPNSPVNKRSYGPGQHGQRRKGKTSDFG). The S4 RNA-binding domain occupies 94 to 154 (QRLDMVVYRA…NKAKEMALVI (61 aa)).

The protein belongs to the universal ribosomal protein uS4 family. Part of the 30S ribosomal subunit. Contacts protein S5. The interaction surface between S4 and S5 is involved in control of translational fidelity.

Functionally, one of the primary rRNA binding proteins, it binds directly to 16S rRNA where it nucleates assembly of the body of the 30S subunit. With S5 and S12 plays an important role in translational accuracy. In Erythrobacter litoralis (strain HTCC2594), this protein is Small ribosomal subunit protein uS4.